The primary structure comprises 417 residues: Serine hydroxymethyltransferase (417 aa).

Residues Leu121 and Gly125 to Leu127 each bind (6S)-5,6,7,8-tetrahydrofolate. Lys229 is modified (N6-(pyridoxal phosphate)lysine). Ser355–Phe357 lines the (6S)-5,6,7,8-tetrahydrofolate pocket.

Belongs to the SHMT family. In terms of assembly, homodimer. Pyridoxal 5'-phosphate serves as cofactor.

The protein localises to the cytoplasm. The catalysed reaction is (6R)-5,10-methylene-5,6,7,8-tetrahydrofolate + glycine + H2O = (6S)-5,6,7,8-tetrahydrofolate + L-serine. It functions in the pathway one-carbon metabolism; tetrahydrofolate interconversion. The protein operates within amino-acid biosynthesis; glycine biosynthesis; glycine from L-serine: step 1/1. In terms of biological role, catalyzes the reversible interconversion of serine and glycine with tetrahydrofolate (THF) serving as the one-carbon carrier. This reaction serves as the major source of one-carbon groups required for the biosynthesis of purines, thymidylate, methionine, and other important biomolecules. Also exhibits THF-independent aldolase activity toward beta-hydroxyamino acids, producing glycine and aldehydes, via a retro-aldol mechanism. The sequence is that of Serine hydroxymethyltransferase from Tolumonas auensis (strain DSM 9187 / NBRC 110442 / TA 4).